Here is a 269-residue protein sequence, read N- to C-terminus: Cytochrome c oxidase subunit 3 (269 aa).

7 consecutive transmembrane segments (helical) span residues 21–41 (PWPI…GLTM), 45–65 (IVGN…MTMW), 90–110 (GFLL…WAYF), 127–147 (VGIT…ILLA), 167–187 (ALNG…CQYI), 204–224 (VFFA…IMLA), and 247–267 (ILYL…MYWW).

Belongs to the cytochrome c oxidase subunit 3 family. In terms of assembly, component of the cytochrome c oxidase (complex IV, CIV), a multisubunit enzyme composed of a catalytic core of 3 subunits and several supernumerary subunits. The complex exists as a monomer or a dimer and forms supercomplexes (SCs) in the inner mitochondrial membrane with ubiquinol-cytochrome c oxidoreductase (cytochrome b-c1 complex, complex III, CIII).

Its subcellular location is the mitochondrion inner membrane. It carries out the reaction 4 Fe(II)-[cytochrome c] + O2 + 8 H(+)(in) = 4 Fe(III)-[cytochrome c] + 2 H2O + 4 H(+)(out). In terms of biological role, component of the cytochrome c oxidase, the last enzyme in the mitochondrial electron transport chain which drives oxidative phosphorylation. The respiratory chain contains 3 multisubunit complexes succinate dehydrogenase (complex II, CII), ubiquinol-cytochrome c oxidoreductase (cytochrome b-c1 complex, complex III, CIII) and cytochrome c oxidase (complex IV, CIV), that cooperate to transfer electrons derived from NADH and succinate to molecular oxygen, creating an electrochemical gradient over the inner membrane that drives transmembrane transport and the ATP synthase. Cytochrome c oxidase is the component of the respiratory chain that catalyzes the reduction of oxygen to water. Electrons originating from reduced cytochrome c in the intermembrane space (IMS) are transferred via the dinuclear copper A center (CU(A)) of subunit 2 and heme A of subunit 1 to the active site in subunit 1, a binuclear center (BNC) formed by heme A3 and copper B (CU(B)). The BNC reduces molecular oxygen to 2 water molecules using 4 electrons from cytochrome c in the IMS and 4 protons from the mitochondrial matrix. This chain is Cytochrome c oxidase subunit 3 (COX3), found in Wickerhamomyces canadensis (Yeast).